A 285-amino-acid chain; its full sequence is uncharacterized protein (285 aa).

An N-terminal signal peptide occupies residues 1–25 (MVKKWLIQFAVMLSVLSTFTYSASA).

This is an uncharacterized protein from Bacillus subtilis (strain 168).